An 888-amino-acid chain; its full sequence is DNA mismatch repair protein MutS (888 aa).

641 to 648 (GPNMAGKS) is an ATP binding site.

It belongs to the DNA mismatch repair MutS family.

Its function is as follows. This protein is involved in the repair of mismatches in DNA. It is possible that it carries out the mismatch recognition step. This protein has a weak ATPase activity. The protein is DNA mismatch repair protein MutS of Rickettsia bellii (strain OSU 85-389).